A 172-amino-acid polypeptide reads, in one-letter code: MDLKNYIATIEDYPQEGVTFRDISPLMANGNAYSYAIREIVQYATDKKIDMIVGPEARGFIVGCPVAYELGVGFAPVRKPGKLPREVIEAHYEKEYGIDTLTMHADAIKPGQRVLIVDDLLATGGTVKATIEMIERLGGIVAGCAFLIELDGLDGRQAIEGYDTKVLMNFPG.

This sequence belongs to the purine/pyrimidine phosphoribosyltransferase family. In terms of assembly, homodimer.

It is found in the cytoplasm. The catalysed reaction is AMP + diphosphate = 5-phospho-alpha-D-ribose 1-diphosphate + adenine. It participates in purine metabolism; AMP biosynthesis via salvage pathway; AMP from adenine: step 1/1. Catalyzes a salvage reaction resulting in the formation of AMP, that is energically less costly than de novo synthesis. The chain is Adenine phosphoribosyltransferase from Streptococcus mutans serotype c (strain ATCC 700610 / UA159).